The sequence spans 365 residues: tRNA/tmRNA (uracil-C(5))-methyltransferase (365 aa).

Residues Gln-189, Tyr-217, Asn-222, Glu-238, and Asp-298 each contribute to the S-adenosyl-L-methionine site. Cys-323 (nucleophile) is an active-site residue. Catalysis depends on Glu-357, which acts as the Proton acceptor.

This sequence belongs to the class I-like SAM-binding methyltransferase superfamily. RNA M5U methyltransferase family. TrmA subfamily.

The catalysed reaction is uridine(54) in tRNA + S-adenosyl-L-methionine = 5-methyluridine(54) in tRNA + S-adenosyl-L-homocysteine + H(+). It catalyses the reaction uridine(341) in tmRNA + S-adenosyl-L-methionine = 5-methyluridine(341) in tmRNA + S-adenosyl-L-homocysteine + H(+). Its function is as follows. Dual-specificity methyltransferase that catalyzes the formation of 5-methyluridine at position 54 (m5U54) in all tRNAs, and that of position 341 (m5U341) in tmRNA (transfer-mRNA). This chain is tRNA/tmRNA (uracil-C(5))-methyltransferase, found in Shewanella sp. (strain W3-18-1).